The primary structure comprises 756 residues: Polyribonucleotide nucleotidyltransferase (756 aa).

The Mg(2+) site is built by D547 and D553. One can recognise a KH domain in the interval 613-672 (PRITSVTIPVNKIGELIGPKGKTINAITEETGADVSIEEDGTVYISAATGEAADAAIDRV). Residues 684–753 (GERFLGTVVK…NRGKISLVPV (70 aa)) enclose the S1 motif domain.

Belongs to the polyribonucleotide nucleotidyltransferase family. The cofactor is Mg(2+).

It is found in the cytoplasm. It catalyses the reaction RNA(n+1) + phosphate = RNA(n) + a ribonucleoside 5'-diphosphate. Its function is as follows. Involved in mRNA degradation. Catalyzes the phosphorolysis of single-stranded polyribonucleotides processively in the 3'- to 5'-direction. This Corynebacterium aurimucosum (strain ATCC 700975 / DSM 44827 / CIP 107346 / CN-1) (Corynebacterium nigricans) protein is Polyribonucleotide nucleotidyltransferase.